The primary structure comprises 491 residues: Nucleoside transporter 1.2 (491 aa).

The next 6 helical transmembrane spans lie at 27–47 (FYVY…VNAV), 82–102 (YNLI…LSWF), 109–129 (VRLL…MVVP), 136–156 (AGAV…KSIF), 173–193 (STMM…QIIV), and 209–229 (KIYY…LILL). Residues 261 to 273 (HTDEHPTHDKEGR) show a composition bias toward basic and acidic residues. 2 disordered regions span residues 261-280 (HTDE…SGKE) and 290-309 (AAAK…PHEV). Residue Asn274 is glycosylated (N-linked (GlcNAc...) asparagine). 5 consecutive transmembrane segments (helical) span residues 333-353 (MFVA…GIAV), 361-381 (WFST…RFSP), 395-415 (WIIV…LLHS), 427-447 (VMEV…LVLG), and 460-480 (FVAG…GTVL).

It belongs to the SLC29A/ENT transporter (TC 2.A.57) family.

The protein localises to the membrane. The enzyme catalyses adenosine(in) + H(+)(in) = adenosine(out) + H(+)(out). It catalyses the reaction uridine(in) + H(+)(in) = uridine(out) + H(+)(out). Sodium-independent nucleoside:H(+) symporter; transports adenosine with high affinity and uridine with moderate affinity. Can transport cytidine and thymidine. The protein is Nucleoside transporter 1.2 of Leishmania donovani.